We begin with the raw amino-acid sequence, 585 residues long: MNIFADFDARIKKTFQDIDLKPKDGGELDLSRIGVEPPRDASHGDIATNAAMVLSKAVGQNPRELAARIAEALKADEDVESVDVAGPGFINLRLKASYWQRELLVMLNEGTDFGRSRLGAGKKVNVEYVSANPTGPMHVGHCRGAVVGDVLANLLKFAGYDVVKEYYINDAGAQIDVLARSVMLRYREALGESIGEIPAGLYPGDYLVRVGQELAGEFGTKLLEMPEAEALAIVKDRTIDAMMAMIRADLDALNVHHDVFYSERKLHVDHARAIRNAINDLTLKGHVYKGKLPPPKGRLPEDWEDREQTLFRSTEVGDDIDRPLMKSDGSFTYFAGDVTYFKDKYDRGFNEMIYVLGADHGGYVKRLEAVARAVSDGKAKLTVLLCQLVKLFRNGEPVRMSKRAGEFITLRDVVDEVGRDPVRFMMLYRKNDAPLDFDFAKVTEQSKDNPVFYVQYASARCHSVFRQAADQLGLVDLDRVAMGSHFEKLTDESEIALVRKLAEYPRLIESAAIHQEPHRLAFYLYDLASSFHSQWNRGAENPDLRFIKVNDPDLSLARLGLVQVVSDVLTSGLTIIGADAPTEMR.

Positions 131 to 141 (ANPTGPMHVGH) match the 'HIGH' region motif.

It belongs to the class-I aminoacyl-tRNA synthetase family. As to quaternary structure, monomer.

It localises to the cytoplasm. It catalyses the reaction tRNA(Arg) + L-arginine + ATP = L-arginyl-tRNA(Arg) + AMP + diphosphate. The chain is Arginine--tRNA ligase from Brucella abortus (strain S19).